Here is a 175-residue protein sequence, read N- to C-terminus: Centrosomal protein 20 (175 aa).

The necessary and sufficient for homooligomerization and localization to centrosomes and pericentriolar satellites stretch occupies residues 1 to 104 (MATIAELKAV…IVEDANGKSV (104 aa)). A LisH domain is found at 49–81 (ENLLINELIREYLEFNKYKYSASVLTAEAGQPE). The tract at residues 137-166 (RQNLAKPSTERNQKDRIPEPGRMAGTSIEE) is disordered. A compositionally biased stretch (basic and acidic residues) spans 144–155 (STERNQKDRIPE).

It belongs to the CEP43 family. As to quaternary structure, homooligomer; probably required for localization to centrosomes.

It is found in the cell projection. The protein resides in the cilium. Its subcellular location is the cytoplasm. It localises to the cytoskeleton. The protein localises to the cilium basal body. It is found in the microtubule organizing center. The protein resides in the centrosome. Its subcellular location is the cytoplasmic granule. It localises to the centriolar satellite. In terms of biological role, involved in the biogenesis of cilia. Required for the recruitment of PLK1 to centrosomes and S phase progression. The chain is Centrosomal protein 20 (CEP20) from Gallus gallus (Chicken).